Here is a 318-residue protein sequence, read N- to C-terminus: Ethyl acetate hydrolase (318 aa).

Catalysis depends on residues S165, D261, and H291.

The protein belongs to the 'GDXG' lipolytic enzyme family. Monomer.

It localises to the cytoplasm. It carries out the reaction ethyl acetate + H2O = ethanol + acetate + H(+). Its activity is regulated as follows. Inhibited by the serine protease inhibitor phenylmethylsulfonyl fluoride, the histidine reagent diethylpyrocarbonate and two sulfhydryl reagents, mercuric chloride and naphthol AS-D chloroacetate. Not inhibited by EDTA. In terms of biological role, esterase that catalyzes the hydrolysis of ethyl acetate. Can also use propyl acetate and the chromogenic substrates alpha-naphthyl acetate, alpha-naphthyl propionate, alpha-naphthyl caproate and 4-nitrophenyl acetate, with a preference for short-chain aliphatic esters. Highest activity is obtained in vitro with propyl acetate, followed by ethyl acetate. In vivo, could be involved in pyoverdine biosynthesis, but its specific role and its in vivo substrate have not been identified. This Pseudomonas putida (Arthrobacter siderocapsulatus) protein is Ethyl acetate hydrolase.